Consider the following 98-residue polypeptide: Large ribosomal subunit protein uL23 (98 aa).

This sequence belongs to the universal ribosomal protein uL23 family. Part of the 50S ribosomal subunit. Contacts protein L29, and trigger factor when it is bound to the ribosome.

Its function is as follows. One of the early assembly proteins it binds 23S rRNA. One of the proteins that surrounds the polypeptide exit tunnel on the outside of the ribosome. Forms the main docking site for trigger factor binding to the ribosome. This is Large ribosomal subunit protein uL23 from Rickettsia rickettsii (strain Iowa).